Here is a 677-residue protein sequence, read N- to C-terminus: Mitochondrial disaggregase (677 aa).

The transit peptide at 1 to 57 (MMLSAVLRRTAPAPRLFLGLIKSPSLQSRGGAYNRSVITGDRGEPQRLRTAAWVRPG) directs the protein to the mitochondrion. Residues 64 to 103 (PGRGAATGGRRGERTEIPYLTAASSGRGPSPEETLPGQDS) are disordered. Residues 92-126 (PSPEETLPGQDSWNGVPNKAGLGMWALAMALVVQC) are autoinhibitory. 4 ANK repeats span residues 133 to 162 (NKDAALMEAARANNVQEVRRLLSEGADVNA), 166 to 195 (LGWTALMVAAISHNESVVQVLLAAGADPNL), 235 to 265 (KGCTALHYAVLADDYSIVKELLGGGANPLQR), and 268 to 297 (MGHTPLDYAREGEVMKLLKTSETKYMEKQR). Positions 316, 318, 353, 354, 355, 356, 357, 358, 425, and 466 each coordinate ATP. The interval 477-505 (LQLRQEALEMSRNRIAENLGDVQISDKIT) is regulatory; slows ATPase and disaggregase activities. R531 contributes to the ATP binding site. At K559 the chain carries N6-acetyllysine. R590 serves as a coordination point for ATP.

It belongs to the ClpA/ClpB family. As to quaternary structure, homododecamer when substrate-bound; the homododecamer consists of 2 homohexamers stacked head-to-head via ANK repeat-mediated interactions. The active substrate-bound form is likely to exist in a dynamic equilibrium between homohexamers and homododecamers. Homotetradecamer in the unbound state which is remodeled upon substrate binding into the homododecamer. Interacts with PHB and PHB2. Interacts with MAVS; the interaction is enhanced by Sendai virus infection. Proteolytically cleaved by protease PARL. ATP-dependent protein disaggregase activity is stimulated by PARL-mediated cleavage of the N-terminal autoinhibitory peptide.

Its subcellular location is the mitochondrion intermembrane space. The catalysed reaction is ATP + H2O = ADP + phosphate + H(+). Disaggregase activity is inhibited by ADP. Functionally, functions as a regulatory ATPase and participates in secretion/protein trafficking process. Has ATP-dependent protein disaggregase activity and is required to maintain the solubility of key mitochondrial proteins. Involved in mitochondrial-mediated antiviral innate immunity, activates RIG-I-mediated signal transduction and production of IFNB1 and pro-inflammatory cytokine IL6. Plays a role in granulocyte differentiation. This is Mitochondrial disaggregase from Rattus norvegicus (Rat).